A 249-amino-acid polypeptide reads, in one-letter code: Transmembrane protein 106C (249 aa).

The interval 1–26 is disordered; sequence MGSRHSTYAHRPFSKRRKADDTEDSL. Glycine 2 is lipidated: N-myristoyl glycine. A run of 2 helical transmembrane segments spans residues 86-106 and 197-217; these read YVLLSILLCLLASGLVVFFLF and SYVYFFCTLPYIGVHNVVVFV.

The protein belongs to the TMEM106 family. In terms of assembly, interacts with TMEM106B.

It localises to the endoplasmic reticulum membrane. The protein localises to the membrane. This chain is Transmembrane protein 106C (TMEM106C), found in Bos taurus (Bovine).